The following is a 54-amino-acid chain: uncharacterized protein (54 aa).

To B.subtilis XkdX.

This is an uncharacterized protein from Bacillus subtilis (strain 168).